A 751-amino-acid polypeptide reads, in one-letter code: Ecdysteroid-phosphate phosphatase (751 aa).

Residues 16–60 (CISKQHLTPLQTLLQMGFPRHRAEKALASTGNRGVQIASDWLLAH) form the UBA domain. Residues 271–336 (ATKQVQKVVY…PVNYTERTAE (66 aa)) enclose the SH3 domain. Disordered regions lie at residues 367–394 (GRSI…FEES) and 458–484 (EPPA…PGSL). A compositionally biased stretch (basic and acidic residues) spans 466–479 (RPDDTLSVHSDHSL). Residues 490–751 (KNRKIYIMRH…RFEWNALSAT (262 aa)) are phosphatase-like. The active site involves R498. H499 functions as the Tele-phosphohistidine intermediate in the catalytic mechanism. The active site involves H681.

The protein resides in the cytoplasm. Its subcellular location is the cytosol. The protein localises to the nucleus. The enzyme catalyses ecdysone 22-phosphate + H2O = ecdysone + phosphate. It carries out the reaction 20-hydroxyecdysone 22-phosphate + H2O = 20-hydroxyecdysone + phosphate. The catalysed reaction is 2-deoxyecdysone 22-phosphate + H2O = 2-deoxyecdysone + phosphate. In terms of biological role, steroid phosphatase that dephosphorylates ecdysteroids such as ecdysone 22-phosphate (E22P), 3-epi-ecdysone 22-phosphate (E22P) and 3-epi-ecdysone 2-phosphate (E2P). Likely catalyzes the conversion of inactive phosphorylated ecdysteroids into their active forms. Shows high activity towards ecdysone 22-phosphate (E22P), but is also significantly active against 3-epi-ecdysone 22-phosphate (E22P) and 3-epi-ecdysone 2-phosphate (E2P). Also displays acid phosphatase activity towards 4-nitrophenyl phosphate (pNNP) in vitro. Has no activity towards 3-epi-ecdysone 3-phosphate (E3P). The protein is Ecdysteroid-phosphate phosphatase of Drosophila melanogaster (Fruit fly).